The primary structure comprises 213 residues: Kynurenine formamidase (213 aa).

Trp-15 serves as a coordination point for substrate. 3 residues coordinate Zn(2+): His-45, His-49, and Asp-51. His-55 acts as the Proton donor/acceptor in catalysis. Positions 157 and 169 each coordinate Zn(2+).

This sequence belongs to the Cyclase 1 superfamily. KynB family. As to quaternary structure, homodimer. Zn(2+) is required as a cofactor.

The enzyme catalyses N-formyl-L-kynurenine + H2O = L-kynurenine + formate + H(+). It functions in the pathway amino-acid degradation; L-tryptophan degradation via kynurenine pathway; L-kynurenine from L-tryptophan: step 2/2. Its function is as follows. Catalyzes the hydrolysis of N-formyl-L-kynurenine to L-kynurenine, the second step in the kynurenine pathway of tryptophan degradation. This Deinococcus geothermalis (strain DSM 11300 / CIP 105573 / AG-3a) protein is Kynurenine formamidase.